Here is a 157-residue protein sequence, read N- to C-terminus: Ribosome maturation factor RimP (157 aa).

Belongs to the RimP family.

It localises to the cytoplasm. Functionally, required for maturation of 30S ribosomal subunits. In Thermobifida fusca (strain YX), this protein is Ribosome maturation factor RimP.